The sequence spans 650 residues: DNA gyrase subunit B (650 aa).

Over residues 400–414 the composition is skewed to basic and acidic residues; sequence RRSQEARELTRRKSP. A disordered region spans residues 400–422; sequence RRSQEARELTRRKSPFDSGSLPG. One can recognise a Toprim domain in the interval 435-549; it reads SELYIVEGDS…QGNIYIAQPP (115 aa). Mg(2+) contacts are provided by glutamate 441, aspartate 514, and aspartate 516.

This sequence belongs to the type II topoisomerase GyrB family. Heterotetramer, composed of two GyrA and two GyrB chains. In the heterotetramer, GyrA contains the active site tyrosine that forms a transient covalent intermediate with DNA, while GyrB binds cofactors and catalyzes ATP hydrolysis. Mg(2+) serves as cofactor. Mn(2+) is required as a cofactor. Requires Ca(2+) as cofactor.

It localises to the cytoplasm. The enzyme catalyses ATP-dependent breakage, passage and rejoining of double-stranded DNA.. In terms of biological role, a type II topoisomerase that negatively supercoils closed circular double-stranded (ds) DNA in an ATP-dependent manner to modulate DNA topology and maintain chromosomes in an underwound state. Negative supercoiling favors strand separation, and DNA replication, transcription, recombination and repair, all of which involve strand separation. Also able to catalyze the interconversion of other topological isomers of dsDNA rings, including catenanes and knotted rings. Type II topoisomerases break and join 2 DNA strands simultaneously in an ATP-dependent manner. This Mycoplasma pneumoniae (strain ATCC 29342 / M129 / Subtype 1) (Mycoplasmoides pneumoniae) protein is DNA gyrase subunit B.